Reading from the N-terminus, the 89-residue chain is Small ribosomal subunit protein uS15 (89 aa).

This sequence belongs to the universal ribosomal protein uS15 family. Part of the 30S ribosomal subunit. Forms a bridge to the 50S subunit in the 70S ribosome, contacting the 23S rRNA.

In terms of biological role, one of the primary rRNA binding proteins, it binds directly to 16S rRNA where it helps nucleate assembly of the platform of the 30S subunit by binding and bridging several RNA helices of the 16S rRNA. Functionally, forms an intersubunit bridge (bridge B4) with the 23S rRNA of the 50S subunit in the ribosome. The chain is Small ribosomal subunit protein uS15 from Exiguobacterium sibiricum (strain DSM 17290 / CCUG 55495 / CIP 109462 / JCM 13490 / 255-15).